The sequence spans 662 residues: F-box/WD repeat-containing protein pof10 (662 aa).

Over residues 1 to 16 the composition is skewed to polar residues; that stretch reads MKSEPTSLDFTSSNLR. A disordered region spans residues 1-27; the sequence is MKSEPTSLDFTSSNLRRMNRDHSSNNT. Positions 28–74 constitute an F-box domain; sequence NRTVLNLPKEILIIIFSFLDPRSLLSAQCTCKYWKKLLSDDLSWRTA. 3 WD repeats span residues 215–260, 263–302, and 429–468; these read SHAD…SLQS, FRSS…GYAR, and TAYS…FLKK. The UIM 1 domain occupies 581 to 600; it reads SEEEIIAYVTMLSQEEEAKR. The disordered stretch occupies residues 617-645; the sequence is ENDEQATSSLNALSSNHEPPQEQANVAEL. Polar residues predominate over residues 621–640; the sequence is QATSSLNALSSNHEPPQEQA. Residues 646 to 662 form the UIM 2 domain; it reads NEQEQIELAMRLSLMEM.

In terms of assembly, part of a SCF (SKP1-cullin-F-box) protein ligase complex. Interacts with skp1.

It localises to the cytoplasm. Functionally, probably recognizes and binds to some phosphorylated proteins and promotes their ubiquitination and degradation. This Schizosaccharomyces pombe (strain 972 / ATCC 24843) (Fission yeast) protein is F-box/WD repeat-containing protein pof10 (pof10).